Consider the following 79-residue polypeptide: Small ribosomal subunit protein uS17 (79 aa).

This sequence belongs to the universal ribosomal protein uS17 family. In terms of assembly, part of the 30S ribosomal subunit.

Functionally, one of the primary rRNA binding proteins, it binds specifically to the 5'-end of 16S ribosomal RNA. This is Small ribosomal subunit protein uS17 from Paramagnetospirillum magneticum (strain ATCC 700264 / AMB-1) (Magnetospirillum magneticum).